We begin with the raw amino-acid sequence, 129 residues long: Small ribosomal subunit protein uS9 (129 aa).

Positions 97 to 129 (LKAQGFLTRDPRKKERKKYGRKKARKSFQFSKR) are disordered. Positions 110-129 (KERKKYGRKKARKSFQFSKR) are enriched in basic residues.

This sequence belongs to the universal ribosomal protein uS9 family.

The sequence is that of Small ribosomal subunit protein uS9 from Chlamydia trachomatis serovar A (strain ATCC VR-571B / DSM 19440 / HAR-13).